The chain runs to 430 residues: tRNA(Ile)-lysidine synthase (430 aa).

27 to 32 provides a ligand contact to ATP; it reads SGGSDS.

Belongs to the tRNA(Ile)-lysidine synthase family.

The protein localises to the cytoplasm. The catalysed reaction is cytidine(34) in tRNA(Ile2) + L-lysine + ATP = lysidine(34) in tRNA(Ile2) + AMP + diphosphate + H(+). In terms of biological role, ligates lysine onto the cytidine present at position 34 of the AUA codon-specific tRNA(Ile) that contains the anticodon CAU, in an ATP-dependent manner. Cytidine is converted to lysidine, thus changing the amino acid specificity of the tRNA from methionine to isoleucine. The protein is tRNA(Ile)-lysidine synthase of Rickettsia bellii (strain RML369-C).